Here is a 342-residue protein sequence, read N- to C-terminus: 4-hydroxy-2-oxovalerate aldolase (342 aa).

The Pyruvate carboxyltransferase domain maps to 7 to 257 (IWITEVALRD…KTGVDLYKMM (251 aa)). 15–16 (RD) contributes to the substrate binding site. Residue aspartate 16 participates in Mn(2+) binding. Residue histidine 19 is the Proton acceptor of the active site. Substrate-binding residues include serine 169 and histidine 196. Residues histidine 196 and histidine 198 each contribute to the Mn(2+) site. Tyrosine 287 provides a ligand contact to substrate.

This sequence belongs to the 4-hydroxy-2-oxovalerate aldolase family.

It catalyses the reaction (S)-4-hydroxy-2-oxopentanoate = acetaldehyde + pyruvate. The sequence is that of 4-hydroxy-2-oxovalerate aldolase (nbaI) from Geobacillus thermodenitrificans (strain NG80-2).